A 134-amino-acid chain; its full sequence is Profilin-2 (134 aa).

The cysteines at positions 13 and 118 are disulfide-linked. Residues alanine 84–threonine 100 carry the Involved in PIP2 interaction motif. Threonine 114 is subject to Phosphothreonine.

It belongs to the profilin family. Occurs in many kinds of cells as a complex with monomeric actin in a 1:1 ratio. Post-translationally, phosphorylated by MAP kinases.

The protein localises to the cytoplasm. Its subcellular location is the cytoskeleton. Functionally, binds to actin and affects the structure of the cytoskeleton. At high concentrations, profilin prevents the polymerization of actin, whereas it enhances it at low concentrations. This is Profilin-2 from Olea europaea (Common olive).